The following is a 280-amino-acid chain: ESX-1 secretion-associated protein EspJ (280 aa).

The residue at position 70 (S70) is a Phosphoserine. 2 stretches are compositionally biased toward low complexity: residues 167-181 (QTIS…QSAQ) and 246-280 (PAQA…TTTL). The tract at residues 167 to 280 (QTISQTAQQA…TPAPSTTTTL (114 aa)) is disordered.

In terms of assembly, residues 76-280 interact with EsxB and an artificial EsxB-EsxA heterodimer. In terms of processing, phosphorylated at Ser-70.

It localises to the secreted. Could be involved in regulation of growth and intracellular survival. The chain is ESX-1 secretion-associated protein EspJ from Mycobacterium tuberculosis (strain ATCC 25618 / H37Rv).